The following is a 138-amino-acid chain: Class I hydrophobin 3 (138 aa).

Residues 1–16 (MRFFLAITALVAAVTA) form the signal peptide. 4 cysteine pairs are disulfide-bonded: cysteine 40–cysteine 111, cysteine 48–cysteine 105, cysteine 49–cysteine 87, and cysteine 112–cysteine 130.

It belongs to the fungal hydrophobin family. In terms of assembly, self-assembles to form functional amyloid fibrils called rodlets. Self-assembly into fibrillar rodlets occurs spontaneously at hydrophobic:hydrophilic interfaces and the rodlets further associate laterally to form amphipathic monolayers.

The protein resides in the secreted. Its subcellular location is the cell wall. Aerial growth, conidiation, and dispersal of filamentous fungi in the environment rely upon a capability of their secreting small amphipathic proteins called hydrophobins (HPBs) with low sequence identity. Class I can self-assemble into an outermost layer of rodlet bundles on aerial cell surfaces, conferring cellular hydrophobicity that supports fungal growth, development and dispersal; whereas Class II form highly ordered films at water-air interfaces through intermolecular interactions but contribute nothing to the rodlet structure. HYD3 is a class I hydrophobin that contributes to the formation of aerial hyphae and fruiting bodies. The chain is Class I hydrophobin 3 from Cordyceps militaris (Caterpillar fungus).